The chain runs to 303 residues: Acetylglutamate kinase (303 aa).

Substrate contacts are provided by residues Gly69–Gly70, Arg91, and Asn190.

This sequence belongs to the acetylglutamate kinase family. ArgB subfamily.

Its subcellular location is the cytoplasm. It carries out the reaction N-acetyl-L-glutamate + ATP = N-acetyl-L-glutamyl 5-phosphate + ADP. It functions in the pathway amino-acid biosynthesis; L-arginine biosynthesis; N(2)-acetyl-L-ornithine from L-glutamate: step 2/4. In terms of biological role, catalyzes the ATP-dependent phosphorylation of N-acetyl-L-glutamate. This is Acetylglutamate kinase from Nocardia farcinica (strain IFM 10152).